A 148-amino-acid polypeptide reads, in one-letter code: MFDTTLLILLGLAALGFISHNTTVAISILVLIIVRVTPLNTFFPWIEKQGLTVGIIILTIGVMAPIASGTLPPSTLIHSFMNWKSLLAIAVGVFVSWLGGRGVSLMGTQPHLVAGLLVGTVLGVALFRGVPVGPLIAAGIISLFIGKS.

The next 4 helical transmembrane spans lie at 14–34, 51–71, 86–106, and 121–141; these read ALGFISHNTTVAISILVLIIV, LTVGIIILTIGVMAPIASGTL, LLAIAVGVFVSWLGGRGVSLM, and VLGVALFRGVPVGPLIAAGII.

Belongs to the UPF0756 family.

The protein localises to the cell membrane. This chain is UPF0756 membrane protein KPK_3307, found in Klebsiella pneumoniae (strain 342).